The chain runs to 669 residues: Carnitine O-palmitoyltransferase 2, mitochondrial (669 aa).

Residues 1–36 (MMAGLLSTQCNSTLSKLKHLSNNPALSVLTSTHRKY) constitute a mitochondrion transit peptide. Over 37-190 (SSKDGAGSEY…GLLEPEVFHL (154 aa)) the chain is Mitochondrial matrix. The segment at residues 191-220 (NPAKSDTDSFKKLIRWVPPSISWFGAYMVN) is an intramembrane region (note=Mitochondrial inner membrane). The Mitochondrial matrix portion of the chain corresponds to 221 to 669 (AYPLDMSQYF…FTVLDGNPIH (449 aa)). The active-site Proton acceptor is His-384. CoA is bound at residue 464–476 (GKEQLKKKKLSPD). 3 residues coordinate (R)-carnitine: Tyr-498, Ser-500, and Thr-511.

It belongs to the carnitine/choline acetyltransferase family.

It localises to the mitochondrion inner membrane. It carries out the reaction (R)-carnitine + hexadecanoyl-CoA = O-hexadecanoyl-(R)-carnitine + CoA. The enzyme catalyses octanoyl-CoA + (R)-carnitine = O-octanoyl-(R)-carnitine + CoA. It catalyses the reaction decanoyl-CoA + (R)-carnitine = O-decanoyl-(R)-carnitine + CoA. The catalysed reaction is dodecanoyl-CoA + (R)-carnitine = O-dodecanoyl-R-carnitine + CoA. It carries out the reaction tetradecanoyl-CoA + (R)-carnitine = O-tetradecanoyl-(R)-carnitine + CoA. The enzyme catalyses (R)-carnitine + octadecanoyl-CoA = O-octadecanoyl-(R)-carnitine + CoA. It catalyses the reaction eicosanoyl-CoA + (R)-carnitine = O-eicosanoyl-(R)-carnitine + CoA. The catalysed reaction is (9Z)-tetradecenoyl-CoA + (R)-carnitine = O-(9Z)-tetradecenoyl-(R)-carnitine + CoA. It carries out the reaction (5Z)-tetradecenoyl-CoA + (R)-carnitine = O-(5Z)-tetradecenoyl-(R)-carnitine + CoA. The enzyme catalyses (R)-carnitine + (9Z)-octadecenoyl-CoA = O-(9Z)-octadecenoyl-(R)-carnitine + CoA. It catalyses the reaction 4,8-dimethylnonanoyl-CoA + (R)-carnitine = O-4,8-dimethylnonanoyl-(R)-carnitine + CoA. It functions in the pathway lipid metabolism; fatty acid beta-oxidation. Functionally, involved in the intramitochondrial synthesis of acylcarnitines from accumulated acyl-CoA metabolites. Reconverts acylcarnitines back into the respective acyl-CoA esters that can then undergo beta-oxidation, an essential step for the mitochondrial uptake of long-chain fatty acids and their subsequent beta-oxidation in the mitochondrion. Active with medium (C8-C12) and long-chain (C14-C18) acyl-CoA esters. This chain is Carnitine O-palmitoyltransferase 2, mitochondrial (cpt2), found in Danio rerio (Zebrafish).